The sequence spans 237 residues: Putative biotin ligase (237 aa).

One can recognise a BPL/LPL catalytic domain in the interval 1 to 191; that stretch reads MEIIHLSEID…KKYKKYSITI (191 aa).

Belongs to the biotin--protein ligase family.

The enzyme catalyses biotin + L-lysyl-[protein] + ATP = N(6)-biotinyl-L-lysyl-[protein] + AMP + diphosphate + H(+). This chain is Putative biotin ligase, found in Methanocaldococcus jannaschii (strain ATCC 43067 / DSM 2661 / JAL-1 / JCM 10045 / NBRC 100440) (Methanococcus jannaschii).